The chain runs to 102 residues: Small ribosomal subunit protein uS10 (102 aa).

The protein belongs to the universal ribosomal protein uS10 family. In terms of assembly, part of the 30S ribosomal subunit.

Involved in the binding of tRNA to the ribosomes. This chain is Small ribosomal subunit protein uS10, found in Trichlorobacter lovleyi (strain ATCC BAA-1151 / DSM 17278 / SZ) (Geobacter lovleyi).